The sequence spans 280 residues: Undecaprenyl-diphosphatase (280 aa).

The next 8 helical transmembrane spans lie at 19 to 39 (FLPV…PFSG), 44 to 64 (FDDL…LFLY), 89 to 109 (FYFL…GFIA), 125 to 145 (ILAS…WFFQ), 156 to 176 (VGFR…IPGV), 197 to 217 (AEFS…YKLI), 226 to 246 (VTIP…TLVI), and 259 to 279 (GVFG…TKFI).

It belongs to the UppP family.

Its subcellular location is the cell inner membrane. It carries out the reaction di-trans,octa-cis-undecaprenyl diphosphate + H2O = di-trans,octa-cis-undecaprenyl phosphate + phosphate + H(+). Functionally, catalyzes the dephosphorylation of undecaprenyl diphosphate (UPP). Confers resistance to bacitracin. The sequence is that of Undecaprenyl-diphosphatase from Leptospira borgpetersenii serovar Hardjo-bovis (strain L550).